Here is a 259-residue protein sequence, read N- to C-terminus: Ribose-5-phosphate isomerase (259 aa).

The protein belongs to the ribose 5-phosphate isomerase family.

It is found in the cytoplasm. The enzyme catalyses aldehydo-D-ribose 5-phosphate = D-ribulose 5-phosphate. Its pathway is carbohydrate degradation; pentose phosphate pathway; D-ribose 5-phosphate from D-ribulose 5-phosphate (non-oxidative stage): step 1/1. The sequence is that of Ribose-5-phosphate isomerase (RKI1) from Vanderwaltozyma polyspora (strain ATCC 22028 / DSM 70294 / BCRC 21397 / CBS 2163 / NBRC 10782 / NRRL Y-8283 / UCD 57-17) (Kluyveromyces polysporus).